The following is a 1050-amino-acid chain: Diacylglycerol kinase iota (1050 aa).

Disordered regions lie at residues 53 to 74 (PSSS…GSGA), 92 to 111 (AAAA…EKEE), and 328 to 356 (SLKA…ETKG). A compositionally biased stretch (low complexity) spans 92–105 (AAAAAALEEPAAAG). The span at 332 to 347 (SNRKKKRTSFKRKASK) shows a compositional bias: basic residues. The DAGKc domain maps to 367-502 (PLMKPLLVFV…DRWNLHVERN (136 aa)). 2 ANK repeats span residues 943–972 (GHCS…AELL) and 979–1008 (TGET…SLRQ). Residues 1048–1050 (TAV) carry the PDZ-binding motif.

This sequence belongs to the eukaryotic diacylglycerol kinase family. Interacts (via PDZ-binding motif) with DLG4; controls the localization of DGKI to the synapse. Interacts (via PDZ-binding motif) with DLG1. Interacts (via PDZ-binding motif) with DLG2. Interacts (via PDZ-binding motif) with DLG3. May interact with RASGRP3; involved in the regulation of RASGRP3 activity. In brain, expressed in the hippocampus and cerebellum with stronger expression in the Purkinje cell layer (at protein level). Expressed in kidney.

Its subcellular location is the cell projection. It is found in the axon. The protein resides in the dendrite. The protein localises to the presynapse. It localises to the postsynapse. Its subcellular location is the postsynaptic density. It is found in the synaptic cell membrane. The protein resides in the cytoplasmic vesicle. The protein localises to the secretory vesicle. It localises to the synaptic vesicle membrane. Its subcellular location is the cytoplasm. It is found in the cytosol. The protein resides in the nucleus. The enzyme catalyses a 1,2-diacyl-sn-glycerol + ATP = a 1,2-diacyl-sn-glycero-3-phosphate + ADP + H(+). The catalysed reaction is 1,2-di-(9Z-octadecenoyl)-sn-glycerol + ATP = 1,2-di-(9Z-octadecenoyl)-sn-glycero-3-phosphate + ADP + H(+). It carries out the reaction 1-octadecanoyl-2-(5Z,8Z,11Z,14Z-eicosatetraenoyl)-sn-glycerol + ATP = 1-octadecanoyl-2-(5Z,8Z,11Z,14Z-eicosatetraenoyl)-sn-glycero-3-phosphate + ADP + H(+). It catalyses the reaction 1-octadecanoyl-2-(9Z,12Z)-octadecadienoyl-sn-glycerol + ATP = 1-octadecanoyl-2-(9Z,12Z-octadecadienoyl)-sn-glycero-3-phosphate + ADP + H(+). The protein operates within lipid metabolism; glycerolipid metabolism. In terms of biological role, diacylglycerol kinase that converts diacylglycerol/DAG into phosphatidic acid/phosphatidate/PA and regulates the respective levels of these two bioactive lipids. Thereby, acts as a central switch between the signaling pathways activated by these second messengers with different cellular targets and opposite effects in numerous biological processes. Has probably no preference for any of the diacylglycerols in terms of the acyl chain composition, especially for the acyl chain at the sn-2 position. By controlling the diacylglycerol/DAG-mediated activation of RASGRP3, negatively regulates the Rap1 signaling pathway. May play a role in presynaptic diacylglycerol/DAG signaling and control neurotransmitter release during metabotropic glutamate receptor-dependent long-term depression. This chain is Diacylglycerol kinase iota, found in Mus musculus (Mouse).